A 236-amino-acid polypeptide reads, in one-letter code: Small ribosomal subunit protein uS2c (236 aa).

Belongs to the universal ribosomal protein uS2 family.

It is found in the plastid. The protein localises to the chloroplast. This chain is Small ribosomal subunit protein uS2c (rps2), found in Guizotia abyssinica (Niger).